Reading from the N-terminus, the 182-residue chain is NADH-quinone oxidoreductase subunit C 2 (182 aa).

The interval 153–182 (YKDKLNPFGAEGPPPTQPDLATNDIPQGGR) is disordered.

The protein belongs to the complex I 30 kDa subunit family. NDH-1 is composed of 14 different subunits. Subunits NuoB, C, D, E, F, and G constitute the peripheral sector of the complex.

The protein resides in the cell inner membrane. It catalyses the reaction a quinone + NADH + 5 H(+)(in) = a quinol + NAD(+) + 4 H(+)(out). Its function is as follows. NDH-1 shuttles electrons from NADH, via FMN and iron-sulfur (Fe-S) centers, to quinones in the respiratory chain. The immediate electron acceptor for the enzyme in this species is believed to be ubiquinone. Couples the redox reaction to proton translocation (for every two electrons transferred, four hydrogen ions are translocated across the cytoplasmic membrane), and thus conserves the redox energy in a proton gradient. The polypeptide is NADH-quinone oxidoreductase subunit C 2 (Rhizobium meliloti (strain 1021) (Ensifer meliloti)).